A 314-amino-acid chain; its full sequence is 3'-5' exoribonuclease YhaM (314 aa).

In terms of domain architecture, HD spans 163 to 279 (HVVSMLDLAK…LHYIDNLDAK (117 aa)).

It belongs to the YhaM family.

Its function is as follows. Shows a 3'-5' exoribonuclease activity. This is 3'-5' exoribonuclease YhaM from Bacillus cereus (strain AH187).